The sequence spans 187 residues: Protein GrpE (187 aa).

The tract at residues 1–30 (MEKKETKSESEKTNKQDNKNTKSQKKENLN) is disordered.

Belongs to the GrpE family. In terms of assembly, homodimer.

Its subcellular location is the cytoplasm. Participates actively in the response to hyperosmotic and heat shock by preventing the aggregation of stress-denatured proteins, in association with DnaK and GrpE. It is the nucleotide exchange factor for DnaK and may function as a thermosensor. Unfolded proteins bind initially to DnaJ; upon interaction with the DnaJ-bound protein, DnaK hydrolyzes its bound ATP, resulting in the formation of a stable complex. GrpE releases ADP from DnaK; ATP binding to DnaK triggers the release of the substrate protein, thus completing the reaction cycle. Several rounds of ATP-dependent interactions between DnaJ, DnaK and GrpE are required for fully efficient folding. In Borreliella burgdorferi (strain ATCC 35210 / DSM 4680 / CIP 102532 / B31) (Borrelia burgdorferi), this protein is Protein GrpE.